The chain runs to 186 residues: NADH-quinone oxidoreductase subunit B 2 (186 aa).

The segment at 1–27 (MPSFTQPHSAPRNFQFPGQQRQGDPTM) is disordered. Positions 65, 66, 130, and 160 each coordinate [4Fe-4S] cluster.

It belongs to the complex I 20 kDa subunit family. NDH-1 is composed of 14 different subunits. Subunits NuoB, C, D, E, F, and G constitute the peripheral sector of the complex. [4Fe-4S] cluster is required as a cofactor.

The protein localises to the cell inner membrane. It carries out the reaction a quinone + NADH + 5 H(+)(in) = a quinol + NAD(+) + 4 H(+)(out). Its function is as follows. NDH-1 shuttles electrons from NADH, via FMN and iron-sulfur (Fe-S) centers, to quinones in the respiratory chain. The immediate electron acceptor for the enzyme in this species is believed to be ubiquinone. Couples the redox reaction to proton translocation (for every two electrons transferred, four hydrogen ions are translocated across the cytoplasmic membrane), and thus conserves the redox energy in a proton gradient. The protein is NADH-quinone oxidoreductase subunit B 2 of Rhizobium etli (strain ATCC 51251 / DSM 11541 / JCM 21823 / NBRC 15573 / CFN 42).